Reading from the N-terminus, the 279-residue chain is Acetylglutamate kinase (279 aa).

Residues 62–63 (GG), Arg-84, and Asn-177 contribute to the substrate site.

The protein belongs to the acetylglutamate kinase family. ArgB subfamily.

The protein resides in the cytoplasm. It catalyses the reaction N-acetyl-L-glutamate + ATP = N-acetyl-L-glutamyl 5-phosphate + ADP. The protein operates within amino-acid biosynthesis; L-arginine biosynthesis; N(2)-acetyl-L-ornithine from L-glutamate: step 2/4. Catalyzes the ATP-dependent phosphorylation of N-acetyl-L-glutamate. This chain is Acetylglutamate kinase, found in Pseudothermotoga lettingae (strain ATCC BAA-301 / DSM 14385 / NBRC 107922 / TMO) (Thermotoga lettingae).